Consider the following 1044-residue polypeptide: Isoleucine--tRNA ligase (1044 aa).

A 'HIGH' region motif is present at residues 48-58 (PFATGLPHFGH). The short motif at 594–598 (KMSKS) is the 'KMSKS' region element. Lys597 is an ATP binding site.

Belongs to the class-I aminoacyl-tRNA synthetase family. IleS type 2 subfamily. Monomer. Requires Zn(2+) as cofactor.

The protein localises to the cytoplasm. It carries out the reaction tRNA(Ile) + L-isoleucine + ATP = L-isoleucyl-tRNA(Ile) + AMP + diphosphate. Catalyzes the attachment of isoleucine to tRNA(Ile). As IleRS can inadvertently accommodate and process structurally similar amino acids such as valine, to avoid such errors it has two additional distinct tRNA(Ile)-dependent editing activities. One activity is designated as 'pretransfer' editing and involves the hydrolysis of activated Val-AMP. The other activity is designated 'posttransfer' editing and involves deacylation of mischarged Val-tRNA(Ile). The sequence is that of Isoleucine--tRNA ligase from Borrelia duttonii (strain Ly).